The following is a 170-amino-acid chain: Thialysine N-epsilon-acetyltransferase (170 aa).

The N-acetyltransferase domain maps to 4–166 (VMIREAKEGD…FRFEGEAMRE (163 aa)). 27–28 (YE) provides a ligand contact to substrate. Lys-29 is subject to N6-acetyllysine. Substrate is bound at residue Glu-92. Acetyl-CoA contacts are provided by residues 94–96 (IYV), 102–107 (GQGIGS), 133–135 (NKR), and Tyr-140. Residue Tyr-140 is the Proton donor of the active site. Glu-152 is a substrate binding site.

Belongs to the acetyltransferase family. As to quaternary structure, homodimer.

It localises to the cytoplasm. The enzyme catalyses S-(2-aminoethyl)-L-cysteine + acetyl-CoA = S-(2-acetamidoethyl)-L-cysteine + CoA + H(+). It carries out the reaction an alkane-alpha,omega-diamine + acetyl-CoA = an N-acetylalkane-alpha,omega-diamine + CoA + H(+). Its function is as follows. Catalyzes the N-acetylation of the amino acid thialysine (S-(2-aminoethyl)-L-cysteine), a L-lysine analog with the 4-methylene group substituted with a sulfur. May also catalyze acetylation of polyamines, such as norspermidine, spermidine or spermine. However, ability to acetylate polyamines is weak, suggesting that it does not act as a diamine acetyltransferase in vivo. In Bos taurus (Bovine), this protein is Thialysine N-epsilon-acetyltransferase.